We begin with the raw amino-acid sequence, 310 residues long: MTASVAAAPDPAGLDPELAHIAPALKAEILAQALPYIRKFHGKTIVIKYGGNAMTEEKLKHGFARDVILLKLVGMNPVVVHGGGPQIDDALKKVGKTGTFIQGMRVTDEETMEVVEWVLGGEVQQDIVMLINQYGGQAVGLTGKDGGLIRAKKLKMPDREQPGQFIDIGFVGDIETINPAVVRALQDDAFIPVISPIGFSDDGQAYNINADVVAGKMAEILKAEKLVMMTNIPGVMDKQGNLLTDLSAREIDELFADGTISGGMLPKISSALDAAKSGVNSVHIIDGRIEHSLLLEILTEQAFGTMIRSH.

Substrate-binding positions include 83 to 84 (GG), R105, and N207.

The protein belongs to the acetylglutamate kinase family. ArgB subfamily.

It localises to the cytoplasm. The enzyme catalyses N-acetyl-L-glutamate + ATP = N-acetyl-L-glutamyl 5-phosphate + ADP. Its pathway is amino-acid biosynthesis; L-arginine biosynthesis; N(2)-acetyl-L-ornithine from L-glutamate: step 2/4. In terms of biological role, catalyzes the ATP-dependent phosphorylation of N-acetyl-L-glutamate. This chain is Acetylglutamate kinase, found in Ralstonia nicotianae (strain ATCC BAA-1114 / GMI1000) (Ralstonia solanacearum).